Consider the following 736-residue polypeptide: Probable beta-glucosidase L (736 aa).

The signal sequence occupies residues 1-21; that stretch reads MNYRVPSLKATALAMAALTQA. N-linked (GlcNAc...) asparagine glycosylation occurs at Asn-224. Asp-252 is an active-site residue. 4 N-linked (GlcNAc...) asparagine glycosylation sites follow: Asn-295, Asn-363, Asn-429, and Asn-607.

It belongs to the glycosyl hydrolase 3 family.

The protein resides in the secreted. It carries out the reaction Hydrolysis of terminal, non-reducing beta-D-glucosyl residues with release of beta-D-glucose.. It participates in glycan metabolism; cellulose degradation. Functionally, beta-glucosidases are one of a number of cellulolytic enzymes involved in the degradation of cellulosic biomass. Catalyzes the last step releasing glucose from the inhibitory cellobiose. This Aspergillus terreus (strain NIH 2624 / FGSC A1156) protein is Probable beta-glucosidase L (bglL).